Consider the following 157-residue polypeptide: Dihydrofolate reductase type 15 (157 aa).

One can recognise a DHFR domain in the interval 2–156 (KLSLMAAISK…INYSYQIWQK (155 aa)).

The protein belongs to the dihydrofolate reductase family. As to quaternary structure, homodimer.

It catalyses the reaction (6S)-5,6,7,8-tetrahydrofolate + NADP(+) = 7,8-dihydrofolate + NADPH + H(+). The protein operates within cofactor biosynthesis; tetrahydrofolate biosynthesis; 5,6,7,8-tetrahydrofolate from 7,8-dihydrofolate: step 1/1. Functionally, key enzyme in folate metabolism. Catalyzes an essential reaction for de novo glycine and purine synthesis, and for DNA precursor synthesis. This Escherichia coli protein is Dihydrofolate reductase type 15 (dhfrXV).